Reading from the N-terminus, the 1137-residue chain is DNA-directed RNA polymerase III subunit RPC2 (1137 aa).

A C4-type zinc finger spans residues 1084-1099 (DVCRTCGRMAYCSWCH). 4 residues coordinate Zn(2+): Cys1086, Cys1089, Cys1098, and Cys1101.

This sequence belongs to the RNA polymerase beta chain family. Component of the RNA polymerase III (Pol III) complex consisting of 17 subunits.

It is found in the nucleus. The enzyme catalyses RNA(n) + a ribonucleoside 5'-triphosphate = RNA(n+1) + diphosphate. DNA-dependent RNA polymerase catalyzes the transcription of DNA into RNA using the four ribonucleoside triphosphates as substrates. Second largest core component of RNA polymerase III which synthesizes small RNAs, such as 5S rRNA and tRNAs. Proposed to contribute to the polymerase catalytic activity and forms the polymerase active center together with the largest subunit. Pol III is composed of mobile elements and Polr3B is part of the core element with the central large cleft and probably a clamp element that moves to open and close the cleft. This chain is DNA-directed RNA polymerase III subunit RPC2, found in Drosophila melanogaster (Fruit fly).